A 439-amino-acid chain; its full sequence is MRRRRKLEHKTYKLNIESFSHEGRGIAHFEDKIIFVSDALPGELVIANRTFSCAKFEEADAKEILKPADNRMKPKCDVFGICGGCSFQNLSSEDQIQIKSRWLKKVFARQAKVEPETWLKSLQFQSWGYRRKARLGIRYVAKKDKVLIGFRERKSSFITNMSRCEVLHPSIGEHLEVLANCIERLSIKSSIPQFEVVISESGIALILRHLESLSVKDEKILADCAQELNITFYTQSGGLDSVKPLDEPTILTYSHSNYNIIMEFLPTDFVQVNFKLNQQMVSLAVELLELNESDKVIDLFCGLGNFTLPIARYAKYVVGIEGDLGLVERAKYNAEKNSINNVDFYRSDLCKEVVGFEWFKGKTYNKALIDPSRSGAIEIVELLPKLGVTRLVYVSCNPATLARDTLKLIKLGFTLETAGVIDMFPQTSHVESIALFVKR.

In terms of domain architecture, TRAM spans 5 to 63 (RKLEHKTYKLNIESFSHEGRGIAHFEDKIIFVSDALPGELVIANRTFSCAKFEEADAKE). Cys-76, Cys-82, Cys-85, and Cys-164 together coordinate [4Fe-4S] cluster. The S-adenosyl-L-methionine site is built by Gln-271, Phe-300, Asn-305, Glu-321, Asp-348, and Asp-370. Cys-396 serves as the catalytic Nucleophile.

It belongs to the class I-like SAM-binding methyltransferase superfamily. RNA M5U methyltransferase family. RlmD subfamily.

It catalyses the reaction uridine(1939) in 23S rRNA + S-adenosyl-L-methionine = 5-methyluridine(1939) in 23S rRNA + S-adenosyl-L-homocysteine + H(+). Functionally, catalyzes the formation of 5-methyl-uridine at position 1939 (m5U1939) in 23S rRNA. The chain is 23S rRNA (uracil(1939)-C(5))-methyltransferase RlmD from Vesicomyosocius okutanii subsp. Calyptogena okutanii (strain HA).